We begin with the raw amino-acid sequence, 423 residues long: Type II methyltransferase M.NlaIV (423 aa).

The SAM-dependent MTase C5-type domain occupies 4-423 (IKFIDLFSGM…AVSERLLHTL (420 aa)). Cys80 is a catalytic residue.

Belongs to the class I-like SAM-binding methyltransferase superfamily. C5-methyltransferase family.

The catalysed reaction is a 2'-deoxycytidine in DNA + S-adenosyl-L-methionine = a 5-methyl-2'-deoxycytidine in DNA + S-adenosyl-L-homocysteine + H(+). In terms of biological role, a methylase that recognizes the double-stranded sequence 5'-GGNNCC-3', methylates C-? on both strands, and protects the DNA from cleavage by the NlaIV endonuclease. This Neisseria lactamica protein is Type II methyltransferase M.NlaIV (nlaIVM).